The following is an 860-amino-acid chain: Tetratricopeptide repeat protein 13 (860 aa).

TPR repeat units lie at residues 143-176, 216-248, 249-282, 284-316, 317-350, 352-384, and 386-418; these read TNEELAIAYVLIGSGLYDEAIRHFSTMLQEEPDL, PEVFEQRAEILSPLGRINEAVNDLTKAIQLQPS, ARLYRHRGTLYFISEDYATAHEDFQQSLELNKNQ, IAMLYKGLTFFHRGLLKEAIESFKEALKQKVDF, IDAYKSLGQAYRELGNFEAATESFQKALLLNQNH, QTLQLRGMMLYHHGSLQEALKNFKRCLQLEPYN, and VCQYMKGLSHVAMGQFYEGIKAQTKVMLNDPLP.

In Homo sapiens (Human), this protein is Tetratricopeptide repeat protein 13 (TTC13).